Reading from the N-terminus, the 270-residue chain is Putative pyruvate, phosphate dikinase regulatory protein 1 (270 aa).

151 to 158 provides a ligand contact to ADP; it reads GVSRTSKT.

This sequence belongs to the pyruvate, phosphate/water dikinase regulatory protein family. PDRP subfamily.

It carries out the reaction N(tele)-phospho-L-histidyl/L-threonyl-[pyruvate, phosphate dikinase] + ADP = N(tele)-phospho-L-histidyl/O-phospho-L-threonyl-[pyruvate, phosphate dikinase] + AMP + H(+). It catalyses the reaction N(tele)-phospho-L-histidyl/O-phospho-L-threonyl-[pyruvate, phosphate dikinase] + phosphate + H(+) = N(tele)-phospho-L-histidyl/L-threonyl-[pyruvate, phosphate dikinase] + diphosphate. Functionally, bifunctional serine/threonine kinase and phosphorylase involved in the regulation of the pyruvate, phosphate dikinase (PPDK) by catalyzing its phosphorylation/dephosphorylation. The chain is Putative pyruvate, phosphate dikinase regulatory protein 1 from Enterococcus faecalis (strain ATCC 700802 / V583).